We begin with the raw amino-acid sequence, 507 residues long: Inositol-3-phosphate synthase (507 aa).

Positions 70, 71, 72, 73, 143, 180, 190, 193, 230, 231, 232, 233, 281, 282, 306, 309, 340, 341, 342, 355, 391, 419, and 420 each coordinate NAD(+).

Belongs to the myo-inositol 1-phosphate synthase family. The cofactor is NAD(+).

Its subcellular location is the cytoplasm. It localises to the cytosol. The protein resides in the nucleus. The enzyme catalyses D-glucose 6-phosphate = 1D-myo-inositol 3-phosphate. Its pathway is polyol metabolism; myo-inositol biosynthesis; myo-inositol from D-glucose 6-phosphate: step 1/2. Key enzyme in myo-inositol biosynthesis pathway that catalyzes the conversion of glucose 6-phosphate to 1-myo-inositol 1-phosphate in a NAD-dependent manner. This chain is Inositol-3-phosphate synthase, found in Citrus paradisi (Grapefruit).